The primary structure comprises 1620 residues: MIKREISVRQQTCALLQKNLLKKWRLKRESLMEWVSSLLLLLFLYWYPHGHGATDLSSVPTKDLGRVDSFRQSGFMIGYTPVTSMTQQIMEKVAATPFMADKKVLGLLDEENIKELTESHAEIIRVIFSDTFSYHLKFQFDQRIPTSRELRDHNAHCDGLYEDVNCLIAIFWKEGFVALQAAINAAIIETTTNHSVMEELLSVSGKFMKIHPFVRQEGILTDFFIFTCIISFSPITYYVSINVARERKRMKGLMMMMGLRDPAFWLSWGLLYAGFVFIMALSLALVIKSVQFFILTSFMVVFSLFLLYGLSMITLAFLMSALVRKSVLTGLSVFLLTIFWGSLGFTSLYRYLPAPVEWTLSLFSPFAFTLGMAQLLRVDYDLNSNAPPDPASGSNLIIATNFMLVFDAFLYLALMMYFEKVLPNEYGHQHSPLFFLKSSFWLQTRKPAHVILEDGIDPVPSSGDSFEPVSPEFHGKESIRIRNISKEYKGKPNKIEALKDLTLDIYEGQITAVLGHSGAGKSTLLNILSGLSVPTKGSVTIYNNNLSEMADLENILRIAGVCPQANVQFDFLTVRENLRLFAKIRGIPPQDVEKEVQRVLLELEMKNIQNILAQNLSGGQKRKLTFGIAILGDSQIFLLDEPTAGLDPFSRHRVWNLLKERRADRVVLFSTQFMDEADILADRKVFISNGRLKCAGSSLFLKKKWGVGYHLSLQLKEVCVPENITSLVKQHIPAAKLSAEGEGKLLYTLPLETTYRFPELCQSLDSCPGLGIENYGVSMTTLNEVFLKLEGKASIDEPEVDIVGEGQTERSGDTERLMEMEQTLSSLRETEKTDGMALWRQQTCAIAKVRLLKLKHERKTLLSVLLILVVGICPFLFENISTKIRQSSYTWELSPHDYFLAPGQQPQGMLTQLLIINKTEASIDDFIHSVERQNIALEVDASGTRDGTDDPSYNGALIVSGNEKNHSFSFACNTKRLNCFPVLMDILSNGLLGMVKPSARIQTDRSTYLMDETIHPLEDLWKTAFWLILTSACPPYIAMSSVTDYKNRAWFQLRVSGLFPSAYWVGQAMVDIPLYCFVFLFMSLMDYLFRFPDTMFSIISHVIQIPCSVGYAISLIFLTYVISFISRKGKKNSGIWSLSFYIITVFSVAVILLAFDVDGTQYYIIFLIPPSTLVGCLILSLHLFIGQIFEEGQVIEPFLVFLIPFLHVFIFIFTLRCLEWKFGKKTMRKDPIFRISPRNNDVYQNPEEPEDEDEDVQMERMRTANALVSTSFDEKPVIIASCLRKEYAGKQKHCLSKKKAKIATRNVSFCVRKGEILGLLGHNGAGKSTSLKMISGDTKVTAGQVLLKGSREGDTPGFLGYCPQENALWPNLTVKEHLEIFAAVRGLRKSHAAVAITRLADALKLQDQLKSPVKTLSEGVKRKLCFVLSILGNPSILLLDEPSTGLDPEGQQQIWQAIRAIIKNTDRGALLTTHYMAEAEALCDRVAILVSGRLRCIGSIQHLKSKFGKDYLLEMKVKTLEQVEPLNTEILRLFPQASRQERYSSLMAYKLPVEAVQPLSQAFFKLEKVKQTFDLEEYSLSQSTLEQVFLELSKEQELDGLELEELDSSIKWKLLPQEEA.

7 helical membrane passes run 30–50, 223–243, 267–287, 298–318, 326–346, 352–372, and 396–416; these read SLME…YPHG, FFIF…SINV, SWGL…ALVI, FMVV…LAFL, SVLT…LGFT, LPAP…TLGM, and LIIA…ALMM. In terms of domain architecture, ABC transporter 1 spans 479–714; it reads IRIRNISKEY…WGVGYHLSLQ (236 aa). 515-522 serves as a coordination point for ATP; the sequence is GHSGAGKS. N-linked (GlcNAc...) asparagine glycosylation occurs at Asn-723. 8 helical membrane passes run 860 to 880, 979 to 999, 1023 to 1043, 1069 to 1089, 1105 to 1125, 1135 to 1155, 1164 to 1184, and 1194 to 1214; these read TLLS…FENI, CFPV…KPSA, TAFW…SSVT, MVDI…DYLF, IPCS…ISFI, IWSL…LLAF, IIFL…LHLF, and VIEP…FIFT. The ABC transporter 2 domain occupies 1283-1516; it reads LRKEYAGKQK…FGKDYLLEMK (234 aa). ATP is bound at residue 1321-1328; sequence GHNGAGKS.

It belongs to the ABC transporter superfamily. ABCA family. As to expression, expressed in heart, brain, lung, liver and skeletal muscle. Highly expressed in the liver, and is also abundant in heart and skeletal muscle. Highly expressed in liver.

The protein resides in the cell membrane. It is found in the basolateral cell membrane. It carries out the reaction taurocholate(in) + ATP + H2O = taurocholate(out) + ADP + phosphate + H(+). The catalysed reaction is cholesterol(in) + ATP + H2O = cholesterol(out) + ADP + phosphate + H(+). Cholesterol efflux is increased by extracellularly applied taurocholate. Functionally, mediates cholesterol and taurocholate efflux. Through the interaction with ABCA1 potentiates the cholesterol efflux to lipid-free APOA1, in turn regulates high-density lipoprotein cholesterol levels. The protein is ABC-type organic anion transporter ABCA8B of Mus musculus (Mouse).